We begin with the raw amino-acid sequence, 36 residues long: Gloverin (36 aa).

The protein localises to the secreted. In terms of biological role, antibacterial protein. The chain is Gloverin from Heliothis virescens (Tobacco budworm moth).